The sequence spans 375 residues: Lipid-A-disaccharide synthase (375 aa).

Belongs to the LpxB family.

The enzyme catalyses a lipid X + a UDP-2-N,3-O-bis[(3R)-3-hydroxyacyl]-alpha-D-glucosamine = a lipid A disaccharide + UDP + H(+). It participates in bacterial outer membrane biogenesis; LPS lipid A biosynthesis. In terms of biological role, condensation of UDP-2,3-diacylglucosamine and 2,3-diacylglucosamine-1-phosphate to form lipid A disaccharide, a precursor of lipid A, a phosphorylated glycolipid that anchors the lipopolysaccharide to the outer membrane of the cell. The chain is Lipid-A-disaccharide synthase from Pseudomonas putida (strain ATCC 700007 / DSM 6899 / JCM 31910 / BCRC 17059 / LMG 24140 / F1).